Consider the following 217-residue polypeptide: Putative cobalt transport protein CbiM (217 aa).

6 consecutive transmembrane segments (helical) span residues 8-28 (LPPE…VYGA), 44-64 (LIAV…PSVT), 74-94 (GIAV…IVLL), 107-127 (TLGA…WIAF), 139-161 (VFAA…LALA), and 181-201 (IFAV…VMLV).

This sequence belongs to the CbiM family. In terms of assembly, forms an energy-coupling factor (ECF) transporter complex composed of an ATP-binding protein (A component, CbiO), a transmembrane protein (T component, CbiQ) and 2 possible substrate-capture proteins (S components, CbiM and CbiN) of unknown stoichimetry.

It localises to the cell membrane. The protein operates within cofactor biosynthesis; adenosylcobalamin biosynthesis. In terms of biological role, part of the energy-coupling factor (ECF) transporter complex CbiMNOQ involved in cobalt import. This chain is Putative cobalt transport protein CbiM, found in Archaeoglobus fulgidus (strain ATCC 49558 / DSM 4304 / JCM 9628 / NBRC 100126 / VC-16).